The chain runs to 290 residues: uncharacterized protein (290 aa).

Residues 161–216 are a coiled coil; it reads SNQREVESLEQLVHEQLNKLNTESKMEFENRKNDTKNEVQQLSARIVELHNLLAVS. A helical membrane pass occupies residues 236–256; sequence AGVVMAFTGFLVLVIPFGLGV.

The protein resides in the mitochondrion membrane. This is an uncharacterized protein from Schizosaccharomyces pombe (strain 972 / ATCC 24843) (Fission yeast).